The sequence spans 270 residues: 3-methyl-2-oxobutanoate hydroxymethyltransferase (270 aa).

2 residues coordinate Mg(2+): Asp-50 and Asp-89. 3-methyl-2-oxobutanoate is bound by residues 50–51 (DS), Asp-89, and Lys-118. Mg(2+) is bound at residue Glu-120. The Proton acceptor role is filled by Glu-187.

The protein belongs to the PanB family. Homodecamer; pentamer of dimers. The cofactor is Mg(2+).

Its subcellular location is the cytoplasm. It catalyses the reaction 3-methyl-2-oxobutanoate + (6R)-5,10-methylene-5,6,7,8-tetrahydrofolate + H2O = 2-dehydropantoate + (6S)-5,6,7,8-tetrahydrofolate. It participates in cofactor biosynthesis; (R)-pantothenate biosynthesis; (R)-pantoate from 3-methyl-2-oxobutanoate: step 1/2. In terms of biological role, catalyzes the reversible reaction in which hydroxymethyl group from 5,10-methylenetetrahydrofolate is transferred onto alpha-ketoisovalerate to form ketopantoate. This Helicobacter pylori (strain G27) protein is 3-methyl-2-oxobutanoate hydroxymethyltransferase.